Consider the following 732-residue polypeptide: MATKFPKFSQALASDPTTRRIWYGIATAHDFESHDGMTEENLYQKIFASHFGHLAIIFLWTSGNLFHVAWQGNFEQWVANPLKTKPLAHAIWDPHFGQAALKAFTRGDTVANISYSGVYHWWYTIGIRNNVELYTGALGLLVLSAVFLLAGWLHIQPKFKPSLSWFKNNESRLNHHLAGLFGVSSLAWTGHLVHVAIPASRGQHVGWDNFIMTPPHPAGLQPFFTGNWSVYAQSPDSMQHVFGTSQGAGTAILTFLGGFHPQTQSLWLTDMAHHHLAIAVIFIVAGHMYRTNFGIGHNLKTILEAHRPPSGRLGKGHIGIYQTLTNSLHFQLGLALASLSVVTSLVAQHMYAMPPYAYMAFDYVTQSALYTHHQYIAGLLIVGAFAHGAIFFIRDYDPEQNQDNVLARMLAHKEAVISHLSWVSLFLGFHTLGLYVHNDVVVAFGNPEKQILIEPIFAQWIQATSGKMLYGFQVLLSSSTSNASVAAQQLWLPGWLEAVNNESNSLFLTIGPGDFLVHHAIALGLHTTTLILVKGALDARGSKLMPDKKDFGYSFPCDGPGRGGTCDISAWDAFYLAMFWMLNTIGWVTFYWHWKHLSLWQGNVAQFNESSTYLMGWLRDYLWLNSSPLINGYNPYGMNSLAVWSWMFLFAHLVWATGFMFLISWRGYWQELIETLAWAHERTPLANLIRWKDKPVALSIVQARLVGLVHFTVGYILTYAAFVIASTAGKFS.

The next 8 helical transmembrane spans lie at 46–69, 133–156, 173–197, 271–289, 328–351, 367–393, 415–437, and 515–533; these read IFAS…FHVA, LYTG…LHIQ, LNHH…HVAI, MAHH…GHMY, LHFQ…QHMY, SALY…IFFI, AVIS…LYVH, and FLVH…LILV. Cys557 and Cys566 together coordinate [4Fe-4S] cluster. The next 2 membrane-spanning stretches (helical) occupy residues 573–594 and 641–663; these read AFYL…YWHW and LAVW…MFLI. Chlorophyll a-binding residues include His652, Met660, and Tyr668. Trp669 contacts phylloquinone. A helical membrane pass occupies residues 705–725; sequence LVGLVHFTVGYILTYAAFVIA.

It belongs to the PsaA/PsaB family. In terms of assembly, the PsaA/B heterodimer binds the P700 chlorophyll special pair and subsequent electron acceptors. PSI consists of a core antenna complex that captures photons, and an electron transfer chain that converts photonic excitation into a charge separation. The eukaryotic PSI reaction center is composed of at least 11 subunits. The cofactor is P700 is a chlorophyll a/chlorophyll a' dimer, A0 is one or more chlorophyll a, A1 is one or both phylloquinones and FX is a shared 4Fe-4S iron-sulfur center..

The protein localises to the plastid. Its subcellular location is the chloroplast thylakoid membrane. It carries out the reaction reduced [plastocyanin] + hnu + oxidized [2Fe-2S]-[ferredoxin] = oxidized [plastocyanin] + reduced [2Fe-2S]-[ferredoxin]. In terms of biological role, psaA and PsaB bind P700, the primary electron donor of photosystem I (PSI), as well as the electron acceptors A0, A1 and FX. PSI is a plastocyanin/cytochrome c6-ferredoxin oxidoreductase, converting photonic excitation into a charge separation, which transfers an electron from the donor P700 chlorophyll pair to the spectroscopically characterized acceptors A0, A1, FX, FA and FB in turn. Oxidized P700 is reduced on the lumenal side of the thylakoid membrane by plastocyanin or cytochrome c6. This Cyanidioschyzon merolae (strain NIES-3377 / 10D) (Unicellular red alga) protein is Photosystem I P700 chlorophyll a apoprotein A2.